The primary structure comprises 409 residues: Putative competence-damage inducible protein (409 aa).

The protein belongs to the CinA family.

The sequence is that of Putative competence-damage inducible protein from Clostridium tetani (strain Massachusetts / E88).